Here is a 61-residue protein sequence, read N- to C-terminus: Large ribosomal subunit protein uL29 (61 aa).

The protein belongs to the universal ribosomal protein uL29 family.

This chain is Large ribosomal subunit protein uL29, found in Stenotrophomonas maltophilia (strain R551-3).